Consider the following 336-residue polypeptide: Flagellar filament 41 kDa core protein (336 aa).

Residues 208 to 236 (AAPVQEGVQQEGAQQPAPATAPSQGGVNS) form a disordered region. Over residues 210 to 233 (PVQEGVQQEGAQQPAPATAPSQGG) the composition is skewed to low complexity.

Belongs to the bacterial flagellin family. The flagellum consists of an outer layer composed of repeating units of FlaA around a core that contains several antigenically related polypeptides.

Its subcellular location is the periplasmic flagellum. It localises to the periplasm. Functionally, component of the core of the flagella. This is Flagellar filament 41 kDa core protein (fla) from Borreliella burgdorferi (strain ATCC 35210 / DSM 4680 / CIP 102532 / B31) (Borrelia burgdorferi).